The sequence spans 437 residues: Serine hydroxymethyltransferase (437 aa).

(6S)-5,6,7,8-tetrahydrofolate is bound by residues Leu130 and 134–136; that span reads GHL. The residue at position 239 (Lys239) is an N6-(pyridoxal phosphate)lysine. 363 to 365 lines the (6S)-5,6,7,8-tetrahydrofolate pocket; sequence TPF.

It belongs to the SHMT family. In terms of assembly, homodimer. Pyridoxal 5'-phosphate serves as cofactor.

It is found in the cytoplasm. It catalyses the reaction (6R)-5,10-methylene-5,6,7,8-tetrahydrofolate + glycine + H2O = (6S)-5,6,7,8-tetrahydrofolate + L-serine. Its pathway is one-carbon metabolism; tetrahydrofolate interconversion. It participates in amino-acid biosynthesis; glycine biosynthesis; glycine from L-serine: step 1/1. Functionally, catalyzes the reversible interconversion of serine and glycine with tetrahydrofolate (THF) serving as the one-carbon carrier. This reaction serves as the major source of one-carbon groups required for the biosynthesis of purines, thymidylate, methionine, and other important biomolecules. Also exhibits THF-independent aldolase activity toward beta-hydroxyamino acids, producing glycine and aldehydes, via a retro-aldol mechanism. The sequence is that of Serine hydroxymethyltransferase from Bartonella henselae (strain ATCC 49882 / DSM 28221 / CCUG 30454 / Houston 1) (Rochalimaea henselae).